Reading from the N-terminus, the 338-residue chain is D-erythrose-4-phosphate dehydrogenase (338 aa).

12–13 (RI) is a binding site for NAD(+). Residues 154-156 (SCT), Arg-200, 213-214 (TK), and Arg-236 contribute to the substrate site. Cys-155 acts as the Nucleophile in catalysis. Position 318 (Asn-318) interacts with NAD(+).

It belongs to the glyceraldehyde-3-phosphate dehydrogenase family. Epd subfamily. In terms of assembly, homotetramer.

The protein resides in the cytoplasm. The catalysed reaction is D-erythrose 4-phosphate + NAD(+) + H2O = 4-phospho-D-erythronate + NADH + 2 H(+). The protein operates within cofactor biosynthesis; pyridoxine 5'-phosphate biosynthesis; pyridoxine 5'-phosphate from D-erythrose 4-phosphate: step 1/5. In terms of biological role, catalyzes the NAD-dependent conversion of D-erythrose 4-phosphate to 4-phosphoerythronate. This chain is D-erythrose-4-phosphate dehydrogenase, found in Pectobacterium carotovorum subsp. carotovorum (strain PC1).